Consider the following 380-residue polypeptide: Queuine tRNA-ribosyltransferase (380 aa).

Residue Asp-95 is the Proton acceptor of the active site. Residues 95–99 (DSGGF), Asp-149, Gln-192, and Gly-219 contribute to the substrate site. Residues 250–256 (GVGSPDA) form an RNA binding region. Asp-269 acts as the Nucleophile in catalysis. An RNA binding; important for wobble base 34 recognition region spans residues 274–278 (TRIAR). Positions 307, 309, 312, and 338 each coordinate Zn(2+).

This sequence belongs to the queuine tRNA-ribosyltransferase family. In terms of assembly, homodimer. Within each dimer, one monomer is responsible for RNA recognition and catalysis, while the other monomer binds to the replacement base PreQ1. Zn(2+) serves as cofactor.

The enzyme catalyses 7-aminomethyl-7-carbaguanine + guanosine(34) in tRNA = 7-aminomethyl-7-carbaguanosine(34) in tRNA + guanine. Its pathway is tRNA modification; tRNA-queuosine biosynthesis. Its function is as follows. Catalyzes the base-exchange of a guanine (G) residue with the queuine precursor 7-aminomethyl-7-deazaguanine (PreQ1) at position 34 (anticodon wobble position) in tRNAs with GU(N) anticodons (tRNA-Asp, -Asn, -His and -Tyr). Catalysis occurs through a double-displacement mechanism. The nucleophile active site attacks the C1' of nucleotide 34 to detach the guanine base from the RNA, forming a covalent enzyme-RNA intermediate. The proton acceptor active site deprotonates the incoming PreQ1, allowing a nucleophilic attack on the C1' of the ribose to form the product. After dissociation, two additional enzymatic reactions on the tRNA convert PreQ1 to queuine (Q), resulting in the hypermodified nucleoside queuosine (7-(((4,5-cis-dihydroxy-2-cyclopenten-1-yl)amino)methyl)-7-deazaguanosine). This chain is Queuine tRNA-ribosyltransferase, found in Latilactobacillus sakei subsp. sakei (strain 23K) (Lactobacillus sakei subsp. sakei).